Here is a 403-residue protein sequence, read N- to C-terminus: Golgin-45 (403 aa).

Residues 1–63 form a disordered region; that stretch reads MEKMTTLKSS…PRKKVSSDSP (63 aa). The Tankyrase-binding motif motif lies at 22 to 26; sequence RGAGD. Position 53 is a phosphoserine (serine 53). Residues 123 to 216 are a coiled coil; it reads RKELSEVKKV…QLERMSIQCD (94 aa). Phosphoserine is present on serine 356. Residues 397–403 are essential for interaction with GORASP2; sequence QGELIAL.

In terms of assembly, interacts with GORASP2. Interacts with the GTP-bound form of RAB2, but not with other Golgi Rab proteins. Identified in a complex with RAB2 and GORASP2. ADP-ribosylated by tankyrase TNKS and TNKS2. Poly-ADP-ribosylated protein is recognized by RNF146, followed by ubiquitination. Post-translationally, ubiquitinated by RNF146 when poly-ADP-ribosylated, leading to its degradation.

The protein localises to the golgi apparatus membrane. Its function is as follows. Required for normal Golgi structure and for protein transport from the endoplasmic reticulum (ER) through the Golgi apparatus to the cell surface. The sequence is that of Golgin-45 (Blzf1) from Mus musculus (Mouse).